Reading from the N-terminus, the 117-residue chain is Dolichyl-diphosphooligosaccharide--protein glycosyltransferase subunit DAD1 (117 aa).

Residues 1–33 are Cytoplasmic-facing; it reads MAKTSSTTKDAQDLFHAIWSAYSATPTNLKIID. The helical transmembrane segment at 34–54 threads the bilayer; it reads LYVVFAVFTALLQDVYMALVG. The Lumenal segment spans residues 55–57; that stretch reads PFP. Residues 58–78 traverse the membrane as a helical segment; the sequence is FNSFLSGVLSCVGTAVLAVCL. The Cytoplasmic segment spans residues 79-96; that stretch reads RIQVNKENKEFKDLGPER. The helical transmembrane segment at 97-117 threads the bilayer; the sequence is AFADFVLCNLVLHLVIMNFLG.

Belongs to the DAD/OST2 family. In terms of assembly, component of the oligosaccharyltransferase (OST) complex.

It is found in the endoplasmic reticulum membrane. Its pathway is protein modification; protein glycosylation. Subunit of the oligosaccharyl transferase (OST) complex that catalyzes the initial transfer of a defined glycan (Glc(3)Man(9)GlcNAc(2) in eukaryotes) from the lipid carrier dolichol-pyrophosphate to an asparagine residue within an Asn-X-Ser/Thr consensus motif in nascent polypeptide chains, the first step in protein N-glycosylation. N-glycosylation occurs cotranslationally and the complex associates with the Sec61 complex at the channel-forming translocon complex that mediates protein translocation across the endoplasmic reticulum (ER). All subunits are required for a maximal enzyme activity. This Pisum sativum (Garden pea) protein is Dolichyl-diphosphooligosaccharide--protein glycosyltransferase subunit DAD1 (DAD1).